We begin with the raw amino-acid sequence, 358 residues long: Phospho-N-acetylmuramoyl-pentapeptide-transferase (358 aa).

10 consecutive transmembrane segments (helical) span residues 27–47 (LFNNFIFIGVFILFFFLSLFA), 81–101 (MGGVFLMIPFFILLLIITINL), 106–126 (LFLLLLTIFGFYITGFLDDYL), 147–167 (VISIIFILLAYEKNLINPLVI), 171–191 (SWVINMNIFILPISFLVLVGI), 201–221 (LDGLAAGCSGIVFYGLGTEIL), 228–248 (LFVFSILCFSMSGLCLGFLKY), 255–275 (IFMGDTGSLSIGATLGTIALL), 278–298 (SVFTLSIFSGIFIIESLSVII), and 336–356 (IVENFWKINILLIILGIVLKI).

Belongs to the glycosyltransferase 4 family. MraY subfamily. Requires Mg(2+) as cofactor.

Its subcellular location is the cell inner membrane. The catalysed reaction is UDP-N-acetyl-alpha-D-muramoyl-L-alanyl-gamma-D-glutamyl-meso-2,6-diaminopimeloyl-D-alanyl-D-alanine + di-trans,octa-cis-undecaprenyl phosphate = di-trans,octa-cis-undecaprenyl diphospho-N-acetyl-alpha-D-muramoyl-L-alanyl-D-glutamyl-meso-2,6-diaminopimeloyl-D-alanyl-D-alanine + UMP. It functions in the pathway cell wall biogenesis; peptidoglycan biosynthesis. Its function is as follows. Catalyzes the initial step of the lipid cycle reactions in the biosynthesis of the cell wall peptidoglycan: transfers peptidoglycan precursor phospho-MurNAc-pentapeptide from UDP-MurNAc-pentapeptide onto the lipid carrier undecaprenyl phosphate, yielding undecaprenyl-pyrophosphoryl-MurNAc-pentapeptide, known as lipid I. In Prochlorococcus marinus (strain MIT 9215), this protein is Phospho-N-acetylmuramoyl-pentapeptide-transferase.